The chain runs to 197 residues: Neurturin (197 aa).

The N-terminal stretch at 1–19 is a signal peptide; that stretch reads MQRWKAAALASVLCSSVLS. The propeptide occupies 20–95; that stretch reads IWMCREGLLL…RAGPRRRRAR (76 aa). The disordered stretch occupies residues 74–93; it reads TPWAGRPPGPRRRAGPRRRR. The segment covering 82-93 has biased composition (basic residues); it reads GPRRRAGPRRRR. Disulfide bonds link Cys-103/Cys-165, Cys-130/Cys-194, and Cys-134/Cys-196. 4 residues coordinate heparan sulfate group: Arg-149, Arg-158, Arg-160, and Gln-162.

This sequence belongs to the TGF-beta family. GDNF subfamily. As to quaternary structure, homodimer; disulfide-linked. Interacts with GFRA2 coreceptor and RET: forms a 2:2:2 ternary complex composed of NRTN ligand, GFRA2 and RET receptor. Also forms a 4:4:4 tetrameric complex composed of 4 copies of NRTN ligand, GFRA2 and RET receptor, which prevents endocytosis of RET.

Its subcellular location is the secreted. Functionally, growth factor that supports the survival of sympathetic neurons in culture. May regulate the development and maintenance of the CNS. Involved in the development of the neural crest. Might control the size of non-neuronal cell population such as haemopoietic cells. Acts by binding to its coreceptor, GFRA2, leading to autophosphorylation and activation of the RET receptor. Heparan sulfate-binding is required for signaling. The polypeptide is Neurturin (Homo sapiens (Human)).